A 463-amino-acid chain; its full sequence is RuvB-like 2 (463 aa).

An N-acetylalanine modification is found at alanine 2. Lysine 9 is covalently cross-linked (Glycyl lysine isopeptide (Lys-Gly) (interchain with G-Cter in SUMO2)). 77–84 lines the ATP pocket; that stretch reads GQPGTGKT. Serine 437 is modified (phosphoserine). Glycyl lysine isopeptide (Lys-Gly) (interchain with G-Cter in SUMO2) cross-links involve residues lysine 444 and lysine 456.

The protein belongs to the RuvB family. Forms homohexameric rings. Can form a dodecamer with RUVBL1 made of two stacked hexameric rings; however, even though RUVBL1 and RUVBL2 are present in equimolar ratio, the oligomeric status of each hexamer is not known. Oligomerization may regulate binding to nucleic acids and conversely, binding to nucleic acids may affect the dodecameric assembly. Interaction of the complex with DHX34 results in conformational changes of the N-terminus of the RUVBL2 subunits, resulting in loss of nucleotide binding ability and ATP hydrolysis of the complex. Interacts with the transcriptional activation domain of MYC. Interacts with ATF2. Component of the RNA polymerase II holoenzyme complex. May also act to bridge the LEF1/TCF1-CTNNB1 complex and TBP. Component of the NuA4 histone acetyltransferase complex which contains the catalytic subunit KAT5/TIP60 and the subunits EP400, TRRAP/PAF400, BRD8/SMAP, EPC1, DMAP1/DNMAP1, RUVBL1/TIP49, RUVBL2, ING3, actin, ACTL6A/BAF53A, MORF4L1/MRG15, MORF4L2/MRGX, MRGBP, YEATS4/GAS41, VPS72/YL1 and MEAF6. The NuA4 complex interacts with MYC and the adenovirus E1A protein. RUVBL2 interacts with EP400. Component of a NuA4-related complex which contains EP400, TRRAP/PAF400, SRCAP, BRD8/SMAP, EPC1, DMAP1/DNMAP1, RUVBL1/TIP49, RUVBL2, actin, ACTL6A/BAF53A, VPS72 and YEATS4/GAS41. Interacts with NPAT. Component of the chromatin-remodeling INO80 complex; specifically part of a complex module associated with the helicase ATP-binding and the helicase C-terminal domain of INO80. Component of some MLL1/MLL complex, at least composed of the core components KMT2A/MLL1, ASH2L, HCFC1/HCF1, WDR5 and RBBP5, as well as the facultative components BACC1, CHD8, E2F6, HSP70, INO80C, KANSL1, LAS1L, MAX, MCRS1, MGA, MYST1/MOF, PELP1, PHF20, PRP31, RING2, RUVB1/TIP49A, RUVB2/TIP49B, SENP3, TAF1, TAF4, TAF6, TAF7, TAF9 and TEX10. Interacts with IGHMBP2. Interacts with TELO2. Interacts with HINT1. Component of a SWR1-like complex. Component of the R2TP complex composed at least of RUVBL1, RUVBL2, RPAP3 and PIHD1. Component of the PAQosome complex which is responsible for the biogenesis of several protein complexes and which consists of R2TP complex members RUVBL1, RUVBL2, RPAP3 and PIH1D1, URI complex members PFDN2, PFDN6, PDRG1, UXT and URI1 as well as ASDURF, POLR2E and DNAAF10/WDR92. Interacts with ITFG1. Interacts with ZMYND10. Interacts with WAC; WAC positively regulates MTOR activity by promoting the assembly of the TTT complex composed of TELO2, TTI1 and TTI2 and the RUVBL complex composed of RUVBL1 and RUVBL2 into the TTT-RUVBL complex which leads to the dimerization of the mTORC1 complex and its subsequent activation. Forms a complex with APPL1 and APPL2. Interacts with ZNHIT2 (via HIT-type zinc finger) in the presence of ATP or ADP; shows a stronger interaction in the presence of ADP. The RUVBL1/RUVBL2 complex interacts with ZNHIT1 (via HIT-type zinc finger), ZNHIT3 (via HIT-type zinc finger), ZNHIT6 (via HIT-type zinc finger) and DDX59/ZNHIT5 (via HIT-type zinc finger) in the presence of ADP. Interacts with NOPCHAP1; the interaction is direct and disrupted upon ATP binding. Interacts with SMG1.

It localises to the nucleus matrix. Its subcellular location is the nucleus. The protein localises to the nucleoplasm. The protein resides in the cytoplasm. It is found in the membrane. It localises to the dynein axonemal particle. It carries out the reaction ATP + H2O = ADP + phosphate + H(+). Functionally, possesses single-stranded DNA-stimulated ATPase and ATP-dependent DNA helicase (5' to 3') activity; hexamerization is thought to be critical for ATP hydrolysis and adjacent subunits in the ring-like structure contribute to the ATPase activity. Component of the NuA4 histone acetyltransferase complex which is involved in transcriptional activation of select genes principally by acetylation of nucleosomal histones H4 and H2A. This modification may both alter nucleosome-DNA interactions and promote interaction of the modified histones with other proteins which positively regulate transcription. This complex may be required for the activation of transcriptional programs associated with oncogene and proto-oncogene mediated growth induction, tumor suppressor mediated growth arrest and replicative senescence, apoptosis, and DNA repair. The NuA4 complex ATPase and helicase activities seem to be, at least in part, contributed by the association of RUVBL1 and RUVBL2 with EP400. NuA4 may also play a direct role in DNA repair when recruited to sites of DNA damage. Component of a SWR1-like complex that specifically mediates the removal of histone H2A.Z/H2AZ1 from the nucleosome. Proposed core component of the chromatin remodeling INO80 complex which exhibits DNA- and nucleosome-activated ATPase activity and catalyzes ATP-dependent nucleosome sliding. Plays an essential role in oncogenic transformation by MYC and also modulates transcriptional activation by the LEF1/TCF1-CTNNB1 complex. May also inhibit the transcriptional activity of ATF2. Involved in the endoplasmic reticulum (ER)-associated degradation (ERAD) pathway where it negatively regulates expression of ER stress response genes. May play a role in regulating the composition of the U5 snRNP complex. This is RuvB-like 2 (Ruvbl2) from Mus musculus (Mouse).